A 502-amino-acid chain; its full sequence is Glycerol kinase (502 aa).

Thr-16 provides a ligand contact to ADP. ATP contacts are provided by Thr-16, Thr-17, and Ser-18. A sn-glycerol 3-phosphate-binding site is contributed by Thr-16. Arg-20 is an ADP binding site. The sn-glycerol 3-phosphate site is built by Arg-86, Glu-87, Tyr-138, and Asp-247. Residues Arg-86, Glu-87, Tyr-138, Asp-247, and Gln-248 each coordinate glycerol. Residues Thr-269 and Gly-312 each coordinate ADP. Thr-269, Gly-312, Gln-316, and Gly-413 together coordinate ATP. Positions 413 and 417 each coordinate ADP.

This sequence belongs to the FGGY kinase family.

It catalyses the reaction glycerol + ATP = sn-glycerol 3-phosphate + ADP + H(+). Its pathway is polyol metabolism; glycerol degradation via glycerol kinase pathway; sn-glycerol 3-phosphate from glycerol: step 1/1. Inhibited by fructose 1,6-bisphosphate (FBP). Its function is as follows. Key enzyme in the regulation of glycerol uptake and metabolism. Catalyzes the phosphorylation of glycerol to yield sn-glycerol 3-phosphate. The polypeptide is Glycerol kinase (Dechloromonas aromatica (strain RCB)).